The sequence spans 436 residues: MFESKINPLWQSFILAVQEEVKPALGCTEPISLALAAAAAAAELDGTVERIDAWVSPNLMKNGMGVTVPGTGMVGLPIAAALGVLGGDAKAGLEVLKDASAKAVADAKAMLAAGHVAVMLQEPCNDILFSRAKVYSGDSWACVTIVGDHTNIVRIETDKGVVFTQADNAQEEEKTSPLGVLSHTSLEEILAFVNAVPFDAIRFILDAARLNGALSQEGLRGSWGLHIGSTLAKQCDRGLLAKDLSTAILIRTSAASDARMGGATLPAMSNSGSGNQGITATVPVMVVAEHVGADDERLARALMLSHLSAIYIHHQLPRLSALCAATTAAMGAAAGMAWLIDGRYDTIAMAISSMIGDVSGMICDGASNSCAMKVSTSASAAWKAVLMALDDTAVTGNEGIVAHNVEQSIANLCSLACRSMQQTDKQIIEIMASKAH.

This sequence belongs to the UPF0597 family.

This chain is UPF0597 protein YhaM, found in Salmonella paratyphi C (strain RKS4594).